A 578-amino-acid polypeptide reads, in one-letter code: Lysine--tRNA ligase (578 aa).

2 residues coordinate Mg(2+): Glu-414 and Glu-421.

The protein belongs to the class-II aminoacyl-tRNA synthetase family. As to quaternary structure, homodimer. Mg(2+) serves as cofactor.

It localises to the cytoplasm. The enzyme catalyses tRNA(Lys) + L-lysine + ATP = L-lysyl-tRNA(Lys) + AMP + diphosphate. The protein is Lysine--tRNA ligase of Porphyromonas gingivalis (strain ATCC BAA-308 / W83).